Consider the following 359-residue polypeptide: Peptide chain release factor 1 (359 aa).

Position 235 is an N5-methylglutamine (Gln-235). Positions 287 to 312 (AQEASAMRSAQVGSGDRSERIRTYNF) are disordered.

This sequence belongs to the prokaryotic/mitochondrial release factor family. Post-translationally, methylated by PrmC. Methylation increases the termination efficiency of RF1.

The protein resides in the cytoplasm. Its function is as follows. Peptide chain release factor 1 directs the termination of translation in response to the peptide chain termination codons UAG and UAA. The protein is Peptide chain release factor 1 of Chlamydia trachomatis serovar L2 (strain ATCC VR-902B / DSM 19102 / 434/Bu).